We begin with the raw amino-acid sequence, 300 residues long: Shikimate kinase, chloroplastic (300 aa).

A chloroplast-targeting transit peptide spans 1–65 (MEARVSQSLQ…SDRRVQLKVS (65 aa)). Residue 111-118 (GMMGCGKT) coordinates ATP. T118 provides a ligand contact to Mg(2+). 3 residues coordinate substrate: D136, R161, and G183. Position 222 (R222) interacts with ATP.

This sequence belongs to the shikimate kinase family. Mg(2+) is required as a cofactor.

The protein localises to the plastid. Its subcellular location is the chloroplast. It catalyses the reaction shikimate + ATP = 3-phosphoshikimate + ADP + H(+). Its pathway is metabolic intermediate biosynthesis; chorismate biosynthesis; chorismate from D-erythrose 4-phosphate and phosphoenolpyruvate: step 5/7. In terms of biological role, catalyzes the specific phosphorylation of the 3-hydroxyl group of shikimic acid using ATP as a cosubstrate. This Solanum lycopersicum (Tomato) protein is Shikimate kinase, chloroplastic (SK).